The following is a 67-amino-acid chain: Small, acid-soluble spore protein 2 (67 aa).

It belongs to the alpha/beta-type SASP family.

SASP are bound to spore DNA. They are double-stranded DNA-binding proteins that cause DNA to change to an a-like conformation. They protect the DNA backbone from chemical and enzymatic cleavage and are thus involved in dormant spore's high resistance to UV light. This chain is Small, acid-soluble spore protein 2 (Su-2), found in Sporosarcina ureae.